A 243-amino-acid chain; its full sequence is Small ribosomal subunit protein uS3 (243 aa).

The region spanning 39-107 is the KH type-2 domain; it reads LRKLISKELQ…KIKLNIKEIH (69 aa). The interval 212–243 is disordered; that stretch reads VAKSPAEPATTAPTPAPERRERQPRRNSNASA.

The protein belongs to the universal ribosomal protein uS3 family. As to quaternary structure, part of the 30S ribosomal subunit. Forms a tight complex with proteins S10 and S14.

In terms of biological role, binds the lower part of the 30S subunit head. Binds mRNA in the 70S ribosome, positioning it for translation. The sequence is that of Small ribosomal subunit protein uS3 from Chloroflexus aurantiacus (strain ATCC 29364 / DSM 637 / Y-400-fl).